Reading from the N-terminus, the 127-residue chain is uncharacterized protein (127 aa).

Position 30 is a phosphothreonine (Thr-30). A disordered region spans residues 51–75 (APTYEQVLYPPASQKKTSNSTSEES). Ser-63 is subject to Phosphoserine.

This is an uncharacterized protein from Mus musculus (Mouse).